A 90-amino-acid polypeptide reads, in one-letter code: Small ribosomal subunit protein uS15c (90 aa).

It belongs to the universal ribosomal protein uS15 family. Part of the 30S ribosomal subunit.

It is found in the plastid. Its subcellular location is the chloroplast. The sequence is that of Small ribosomal subunit protein uS15c (rps15) from Lotus japonicus (Lotus corniculatus var. japonicus).